A 144-amino-acid polypeptide reads, in one-letter code: Large ribosomal subunit protein uL15 (144 aa).

The interval 1–52 is disordered; sequence MYLNTISPMKKSNHSSKRKGRGIGSGKGKTSGRGHKGQRSRSGGKVRRGFEG. Basic residues-rich tracts occupy residues 11-21 and 30-47; these read KSNHSSKRKGR and TSGR…GKVR.

This sequence belongs to the universal ribosomal protein uL15 family. Part of the 50S ribosomal subunit.

Its function is as follows. Binds to the 23S rRNA. The protein is Large ribosomal subunit protein uL15 of Wigglesworthia glossinidia brevipalpis.